We begin with the raw amino-acid sequence, 2286 residues long: Unconventional myosin-IXAb (2286 aa).

The region spanning 16–114 (SEFTLRVYPG…YRFLLREKNL (99 aa)) is the Ras-associating domain. The region spanning 148–971 (AQFVADLCSL…LRQRLQDELH (824 aa)) is the Myosin motor domain. The helical transmembrane segment at 178–198 (IYTYVGSILIAVNPFKFLPIY) threads the bilayer. 242–249 (GESGSGKT) is an ATP binding site. The interval 853-875 (LNKLMETLGQSEPYFVKCIRSNA) is actin-binding. 4 IQ domains span residues 976–996 (RRIVCLQRSFRTQRDRKHFCR), 1025–1054 (QQGAALRLQAVWRGFRARRLYLQQRRAVLI), 1066–1095 (RNTAATLIQAVWRTRTHRRSFLQQRRAAVT), and 1089–1118 (QRRAAVTLQAACRGQQSRQRCRILREQQCR). Positions 976–1113 (RRIVCLQRSF…QSRQRCRILR (138 aa)) are neck or regulatory domain. Residues 1114–2254 (EQQCREQSKH…PRANRSCPPK (1141 aa)) form a tail region. Disordered stretches follow at residues 1118–1279 (REQS…QIRE), 1308–1341 (DVPLSNGESASDCSIIPEPRTNHELDTGSSFSVS), 1455–1588 (CEED…EPML), and 1732–1754 (DGTISKAPKPERKKRRKKESDTV). Residues 1123–1133 (HPSTVTKSLHQ) show a composition bias toward polar residues. Over residues 1134–1149 (NTEEAEKLEEVWEKQT) the composition is skewed to basic and acidic residues. A compositionally biased stretch (polar residues) spans 1263-1273 (PINSAPQTPNR). The segment covering 1455–1465 (CEEDEDDEYED) has biased composition (acidic residues). Over residues 1485–1501 (CVFHSDSEMSSQKEQKR) the composition is skewed to basic and acidic residues. The segment covering 1529 to 1542 (RGKMRFWSKSKHGD) has biased composition (basic residues). Composition is skewed to basic and acidic residues over residues 1550–1562 (RSADSELTDRRND) and 1572–1585 (GVSERRRDSKENRE). The Phorbol-ester/DAG-type zinc finger occupies 1759-1808 (GHIFKSTQYSIPTYCEFCSSLIWMMDKACVCKLCRYACHKKCCLRMTTKC). Positions 1823–2011 (VELSRLTSDE…LIICEQMRKY (189 aa)) constitute a Rho-GAP domain. Basic residues predominate over residues 2032-2049 (LTHIRRSMGKSRARKSGH). 2 disordered regions span residues 2032 to 2087 (LTHI…QQEE) and 2113 to 2286 (PRAS…EFMV). Residues 2080 to 2107 (QAAMQQEEKVLTQQIENLQKEKEELTYE) adopt a coiled-coil conformation. 2 stretches are compositionally biased toward low complexity: residues 2176–2192 (SLDSVDSAVASLSSVSS) and 2200–2211 (SSSSGPLFSSSS). Residues 2226-2238 (EQASLSARCASSS) are compositionally biased toward polar residues. Over residues 2254–2270 (KPREPGDTGGRRREHEF) the composition is skewed to basic and acidic residues.

Belongs to the TRAFAC class myosin-kinesin ATPase superfamily. Myosin family.

The protein resides in the membrane. The protein localises to the cytoplasm. It is found in the synapse. Its subcellular location is the cell projection. It localises to the growth cone. Functionally, myosins are actin-based motor molecules with ATPase activity. Unconventional myosins serve in intracellular movements. Regulates Rho by stimulating it's GTPase activity in neurons. Required for the regulation of neurite branching and motor neuron axon guidance. This is Unconventional myosin-IXAb (myo9ab) from Danio rerio (Zebrafish).